Here is a 69-residue protein sequence, read N- to C-terminus: MATEYRTASWKLWLILDPRRVLTALFVYLTVIALLIHFGLLSTDRLNWWEFQRGLPKAASLVVVPPAVG.

Residues 2-20 (ATEYRTASWKLWLILDPRR) are Cytoplasmic-facing. The chain crosses the membrane as a helical span at residues 21–41 (VLTALFVYLTVIALLIHFGLL). His-37 is a binding site for a bacteriochlorophyll. Topologically, residues 42-59 (STDRLNWWEFQRGLPKAA) are periplasmic. The propeptide occupies 60–69 (SLVVVPPAVG).

Belongs to the antenna complex alpha subunit family. As to quaternary structure, the core complex is formed by different alpha and beta chains, binding bacteriochlorophyll molecules, and arranged most probably in tetrameric structures disposed around the reaction center. The non-pigmented gamma chains may constitute additional components.

The protein resides in the cell inner membrane. Its function is as follows. Antenna complexes are light-harvesting systems, which transfer the excitation energy to the reaction centers. This is Light-harvesting protein B-1015 alpha chain (pufA) from Blastochloris viridis (Rhodopseudomonas viridis).